Here is a 264-residue protein sequence, read N- to C-terminus: Putative hydro-lyase Bpet2233 (264 aa).

Belongs to the D-glutamate cyclase family.

The protein is Putative hydro-lyase Bpet2233 of Bordetella petrii (strain ATCC BAA-461 / DSM 12804 / CCUG 43448).